We begin with the raw amino-acid sequence, 210 residues long: Probable HTH-type transcriptional regulator ArpR (210 aa).

In terms of domain architecture, HTH tetR-type spans 10–70 (QETRAQIIEA…ALLDSLHETH (61 aa)). Residues 33–52 (TLADIAELAGVTRGAIYWHF) constitute a DNA-binding region (H-T-H motif).

Probable regulatory protein for the antibiotic efflux pump arpABC operon. May function as a repressor. This is Probable HTH-type transcriptional regulator ArpR (arpR) from Pseudomonas putida (Arthrobacter siderocapsulatus).